A 207-amino-acid polypeptide reads, in one-letter code: Large ribosomal subunit protein uL4 (207 aa).

The tract at residues 56–76 (EVRGGGRKPWRQKGTGRARAG) is disordered. Positions 60–71 (GGRKPWRQKGTG) are enriched in basic residues.

It belongs to the universal ribosomal protein uL4 family. Part of the 50S ribosomal subunit.

One of the primary rRNA binding proteins, this protein initially binds near the 5'-end of the 23S rRNA. It is important during the early stages of 50S assembly. It makes multiple contacts with different domains of the 23S rRNA in the assembled 50S subunit and ribosome. Functionally, forms part of the polypeptide exit tunnel. This chain is Large ribosomal subunit protein uL4, found in Desulfitobacterium hafniense (strain Y51).